The chain runs to 320 residues: Malate dehydrogenase (320 aa).

NAD(+)-binding positions include 10–15 (GSGMIG) and aspartate 34. The substrate site is built by arginine 83 and arginine 89. Residues asparagine 96 and 119 to 121 (ITN) contribute to the NAD(+) site. Positions 121 and 152 each coordinate substrate. Histidine 176 serves as the catalytic Proton acceptor.

Belongs to the LDH/MDH superfamily. MDH type 3 family.

The catalysed reaction is (S)-malate + NAD(+) = oxaloacetate + NADH + H(+). Functionally, catalyzes the reversible oxidation of malate to oxaloacetate. The sequence is that of Malate dehydrogenase from Rhizobium meliloti (strain 1021) (Ensifer meliloti).